The following is a 546-amino-acid chain: Glucose-6-phosphate isomerase 1 (546 aa).

Residue Glu-353 is the Proton donor of the active site. Active-site residues include His-384 and Lys-512.

This sequence belongs to the GPI family.

The protein localises to the cytoplasm. The enzyme catalyses alpha-D-glucose 6-phosphate = beta-D-fructose 6-phosphate. It functions in the pathway carbohydrate biosynthesis; gluconeogenesis. Its pathway is carbohydrate degradation; glycolysis; D-glyceraldehyde 3-phosphate and glycerone phosphate from D-glucose: step 2/4. Catalyzes the reversible isomerization of glucose-6-phosphate to fructose-6-phosphate. The protein is Glucose-6-phosphate isomerase 1 of Colwellia psychrerythraea (strain 34H / ATCC BAA-681) (Vibrio psychroerythus).